We begin with the raw amino-acid sequence, 1724 residues long: Protein scribble homolog (1724 aa).

A sufficient for targeting to adherens junction region spans residues 1-821; sequence MLKCIPLWRC…MTVLRERMVE (821 aa). 17 LRR repeats span residues 11–34, 35–58, 59–81, 83–105, 107–127, 128–150, 151–174, 176–196, 197–219, 221–242, 244–265, 266–288, 289–311, 312–334, 336–357, 359–380, and 382–405; these read NRHV…IYRY, NRSL…FFRL, HNLR…VANF, QLVE…KFCQ, LEIA…FTQL, RGLA…IGNL, SNLV…SFLV, LEQL…LGAL, PNLR…LGNL, QLVC…ISGL, ALTD…IGSL, KKLS…IGEC, ENLT…LGKL, KKLT…LGGC, SLNV…LANA, ELHV…LANL, and LKAM…DDEQ. Disordered regions lie at residues 451 to 484, 496 to 620, and 646 to 683; these read RDDS…LKVM, YTAR…RKDT, and SHDG…HTPF. Residues 518–534 show a composition bias toward low complexity; it reads SNQSHDSQASSSTTSAT. The span at 554–567 shows a compositional bias: acidic residues; it reads VQEEEDLDEMEVEY. The span at 574-583 shows a compositional bias: basic and acidic residues; the sequence is FAEEPIIRGG. Acidic residues predominate over residues 584-598; sequence DEDDDYDNDDDDAER. Residues 611 to 620 are compositionally biased toward basic and acidic residues; it reads EKQRLIRKDT. Over residues 661–678 the composition is skewed to acidic residues; the sequence is RDGEDDEEEEEDEDEEDD. PDZ domains follow at residues 731–818, 867–955, 1005–1094, and 1101–1193; these read TLSI…LRER, ATCL…DREQ, EVTL…RRDP, and EIVI…CDGF. The tract at residues 955–995 is disordered; it reads QSSVGGASPRTRPHSPPPPEPSDSPEQEDGGDEHLGNHLNC. Disordered regions lie at residues 1283–1407, 1414–1433, 1449–1468, and 1488–1555; these read LQKV…DRQK, KQQT…EDDL, REFM…AKQV, and SLGS…GESA. Residues 1295–1306 show a composition bias toward basic and acidic residues; sequence FRIDSPVRDAAH. Composition is skewed to polar residues over residues 1308 to 1329, 1346 to 1357, and 1364 to 1385; these read PHNS…NAST, PASQDGHSSPNP, and PINS…KQPS. Positions 1395 to 1407 are enriched in basic and acidic residues; that stretch reads HSPEQRSFKDRQK. Residues 1430–1461 are a coiled coil; it reads EDDLKKMKEEEAKRIEQRAREFMLDEDEEEEE. Positions 1453 to 1463 are enriched in acidic residues; the sequence is LDEDEEEEEED. Over residues 1490–1506 the composition is skewed to polar residues; it reads GSPTSRQCATPPNYSAT. A compositionally biased stretch (low complexity) spans 1507–1518; sequence PPSHCGSSGPSS. A compositionally biased stretch (basic and acidic residues) spans 1521 to 1538; that stretch reads GKGDSQRNSVEDSFRLEQ. A Phosphoserine modification is found at serine 1609. Residues 1621–1684 form a disordered region; the sequence is IAKSKEGKKR…FMDESSSNAV (64 aa). Residues 1623-1632 are compositionally biased toward basic and acidic residues; it reads KSKEGKKRGT.

In terms of processing, palmitoylated.

The protein localises to the cell membrane. The protein resides in the cell junction. It is found in the adherens junction. Its subcellular location is the cell projection. It localises to the lamellipodium. The protein localises to the cytoplasm. The protein resides in the postsynapse. It is found in the presynapse. Functionally, scaffold protein involved in different aspects of polarized cells differentiation regulating epithelial and neuronal morphogenesis. Regulates the caudal migration of the nVII motor neurons. Required for convergent extension movements during gastrulation. The sequence is that of Protein scribble homolog (scrib) from Danio rerio (Zebrafish).